Consider the following 461-residue polypeptide: FAD-dependent monooxygenase nodY2 (461 aa).

Residues glutamate 48 and arginine 136 each contribute to the FAD site. Residue arginine 214 is part of the active site. FAD contacts are provided by aspartate 338 and glycine 351.

It belongs to the paxM FAD-dependent monooxygenase family. FAD is required as a cofactor.

It functions in the pathway secondary metabolite biosynthesis. Functionally, FAD-dependent monooxygenase; part of the gene cluster that mediates the biosynthesis of the indole diterpenes nodulisporic acids (NA). Nodulisporic acid A (NAA) and its chemically modified derivatives are of particular significance because of their highly potent insecticidal activity against blood-feeding arthropods and lack of observable adverse effects on mammals, in particular the tremogenicity associated with the paspaline-derived IDTs is not observed. The geranylgeranyl diphosphate (GGPP) synthase ggs1, localized outside of the cluster, is proposed to catalyze the first step in nodulisporic acid biosynthesis via conversion of farnesyl pyrophosphate and isopentyl pyrophosphate into geranylgeranyl pyrophosphate (GGPP). Condensation of indole-3-glycerol phosphate with GGPP by the prenyl transferase nodC then forms 3-geranylgeranylindole (3-GGI). Epoxidation by the FAD-dependent monooxygenase nodM leads to a single-epoxidized-GGI that is substrate of the terpene cyclase nodB for cyclization to yield emindole SB. The terminal methyl carbon, C28, of emindole SB is then oxidized by the cytochrome P450 monooxygenase nodW to produce nodulisporic acid F (NAF), the pentacyclic core of NAA. NAF is converted to nodulisporic acid E (NAE) via prenylation. This step is probably performed by one of the indole diterpene prenyltransferases nodD1 or nodD2. Several oxidation steps performed by the FAD-linked oxidoreductase nodO and one of the cytochrome P450 monooxygenase nodR, nodX or nodZ further convert NAE to nodulisporic acid D (NAD). NAD is substrate of cytochrome P450 monooxygenase nodJ to produce the precursor of nodulisporic acid C (NAC), converted to NAC by one of the indole diterpene prenyltransferases nodD1 or nodD2. The FAD-dependent monooxygenase nodY2 then oxidizes NAC to nodulisporic acid B (NAB). Finally NAB is converted to NAA by one of the cytochrome P450 monooxygenases nodR, nodX or nodZ. This chain is FAD-dependent monooxygenase nodY2, found in Hypoxylon pulicicidum.